The following is a 478-amino-acid chain: Zinc finger protein 410 (478 aa).

2 disordered regions span residues P84–L113 and N187–Q214. The segment covering T103–L113 has biased composition (polar residues). 5 consecutive C2H2-type zinc fingers follow at residues L219–H243, F249–H273, F279–H303, F309–H333, and H339–H362. Zn(2+) contacts are provided by C221, C226, H239, H243, C251, C256, H269, H273, C281, C286, H299, H303, C311, C316, H329, H333, C341, C344, H357, and H361.

As to quaternary structure, interacts with CDKN2A/p14ARF. Post-translationally, O-glycosylated. O-GlcNAcylation may occur in response to increasing glucose levels and affect transcription factor activity. In terms of processing, sumoylated. Sumoylation increases its half-life, possibly by blocking ubiquitin-mediated degradation.

Its subcellular location is the nucleus. The protein localises to the chromosome. Its function is as follows. Transcription factor that binds to the sequence motif 5'-CATCCCATAATA-3', and is specifically required to silence expression of fetal hemoglobin in adult erythroid cells. Prevents expression of fetal hemoglobin genes HBG1 and HBG2 through CHD4: acts as a direct transcriptional activator of CHD4, a central component of the NuRD complex that represses transcription of fetal hemoglobin genes HBG1 and HBG2 in erythroid cells. May also activate transcription of matrix-remodeling genes such as MMP1 during fibroblast senescence. May activate transcription of the gap junction gene GJC1, perhaps in response to increasing glucose. However, recent studies suggest that ZNF410 is dedicated to regulate expression of a single gene: CHD4. The chain is Zinc finger protein 410 from Mus musculus (Mouse).